The sequence spans 274 residues: 2,3,4,5-tetrahydropyridine-2,6-dicarboxylate N-succinyltransferase (274 aa).

Residues Arg-106 and Asp-143 each contribute to the substrate site.

The protein belongs to the transferase hexapeptide repeat family. As to quaternary structure, homotrimer.

The protein resides in the cytoplasm. It carries out the reaction (S)-2,3,4,5-tetrahydrodipicolinate + succinyl-CoA + H2O = (S)-2-succinylamino-6-oxoheptanedioate + CoA. It participates in amino-acid biosynthesis; L-lysine biosynthesis via DAP pathway; LL-2,6-diaminopimelate from (S)-tetrahydrodipicolinate (succinylase route): step 1/3. The chain is 2,3,4,5-tetrahydropyridine-2,6-dicarboxylate N-succinyltransferase from Rickettsia rickettsii (strain Sheila Smith).